The chain runs to 349 residues: UDP-3-O-acylglucosamine N-acyltransferase (349 aa).

Residue His246 is the Proton acceptor of the active site.

The protein belongs to the transferase hexapeptide repeat family. LpxD subfamily. Homotrimer.

It carries out the reaction a UDP-3-O-[(3R)-3-hydroxyacyl]-alpha-D-glucosamine + a (3R)-hydroxyacyl-[ACP] = a UDP-2-N,3-O-bis[(3R)-3-hydroxyacyl]-alpha-D-glucosamine + holo-[ACP] + H(+). Its pathway is bacterial outer membrane biogenesis; LPS lipid A biosynthesis. Its function is as follows. Catalyzes the N-acylation of UDP-3-O-acylglucosamine using 3-hydroxyacyl-ACP as the acyl donor. Is involved in the biosynthesis of lipid A, a phosphorylated glycolipid that anchors the lipopolysaccharide to the outer membrane of the cell. The chain is UDP-3-O-acylglucosamine N-acyltransferase from Nostoc sp. (strain PCC 7120 / SAG 25.82 / UTEX 2576).